The following is a 144-amino-acid chain: Large ribosomal subunit protein uL15 (144 aa).

The interval 1-52 (MIKLESLQDPSPRKRRKKLLGRGPGSGHGKTSGRGHKGDGSRSGYKRRFGYE) is disordered. Gly residues predominate over residues 22–32 (RGPGSGHGKTS).

It belongs to the universal ribosomal protein uL15 family. As to quaternary structure, part of the 50S ribosomal subunit.

In terms of biological role, binds to the 23S rRNA. The polypeptide is Large ribosomal subunit protein uL15 (Chlamydia felis (strain Fe/C-56) (Chlamydophila felis)).